Reading from the N-terminus, the 500-residue chain is Melanopsin (500 aa).

Residues 1–65 (MSHHSSWRGH…TVDVPDHAHY (65 aa)) are Extracellular-facing. N-linked (GlcNAc...) asparagine glycosylation occurs at asparagine 18. Residues 66–86 (IIGAVILIVGITGVIGNALVI) form a helical membrane-spanning segment. The Cytoplasmic segment spans residues 87–101 (YVFCRSRTLRTAGNM). The chain crosses the membrane as a helical span at residues 102–122 (FVVNLAVADFFMSLTQSPVFF). Topologically, residues 123–138 (AASLHRRWIFGERICE) are extracellular. A disulfide bridge links cysteine 137 with cysteine 215. The helical transmembrane segment at 139-159 (LYAFCGALFGICSMMTLTAIA) threads the bilayer. Over 160–182 (ADRCLAITQPLALVGNVSRRKAG) the chain is Cytoplasmic. A helical transmembrane segment spans residues 183 to 203 (AVLAVVWLYSLGWSLPPFFGW). Over 204 to 232 (SAYVPEGLQTSCSWDYMTFTPSVRAYTIL) the chain is Extracellular. Residues 233 to 253 (LFIFVFFIPLGIIVSCYVGIF) form a helical membrane-spanning segment. Topologically, residues 254 to 286 (QAIRAMGKEIRELDCGETQKVYERMQNEWKMAK) are cytoplasmic. Residues 287–307 (IALLVILLFVISWSPYSVVAL) form a helical membrane-spanning segment. The Extracellular segment spans residues 308 to 322 (TATAGYSHLLTPYMN). Residues 323 to 343 (SVPAVIAKASAIHNPIIYAIT) form a helical membrane-spanning segment. An N6-(retinylidene)lysine modification is found at lysine 330. Residues 344 to 500 (HPKYRAAIAR…DGKALLLGGN (157 aa)) lie on the Cytoplasmic side of the membrane. Disordered stretches follow at residues 406 to 428 (GKKR…ADGS), 448 to 470 (VILS…AHKV), and 481 to 500 (ETDS…LGGN). 2 stretches are compositionally biased toward polar residues: residues 411–428 (SSAS…ADGS) and 448–462 (VILS…ASGQ).

It belongs to the G-protein coupled receptor 1 family. Opsin subfamily. As to expression, expressed in a subset of retinal horizontal cells as well as in retinal ganglion cells.

It is found in the cell membrane. In terms of biological role, photoreceptor implicated in non-image-forming responses to light. The polypeptide is Melanopsin (opn4) (Rutilus rutilus (Roach)).